Reading from the N-terminus, the 158-residue chain is Urease subunit beta (158 aa).

A disordered region spans residues Glu113–Asn158. Residues Ala134–Glu143 show a composition bias toward basic and acidic residues. Positions Ala144–Asn158 are enriched in acidic residues.

The protein belongs to the urease beta subunit family. As to quaternary structure, heterotrimer of UreA (gamma), UreB (beta) and UreC (alpha) subunits. Three heterotrimers associate to form the active enzyme.

It localises to the cytoplasm. It carries out the reaction urea + 2 H2O + H(+) = hydrogencarbonate + 2 NH4(+). Its pathway is nitrogen metabolism; urea degradation; CO(2) and NH(3) from urea (urease route): step 1/1. This is Urease subunit beta from Corynebacterium glutamicum (strain R).